The following is a 134-amino-acid chain: Ethylmalonyl-CoA/methylmalonyl-CoA epimerase (134 aa).

The region spanning 4 to 134 (RLNHVAIAVP…NGCLVELEQV (131 aa)) is the VOC domain. Residues His-7, His-79, and Glu-130 each contribute to the Co(2+) site. The Proton donor/acceptor role is filled by Glu-130.

Belongs to the methylmalonyl-CoA epimerase family. Co(2+) is required as a cofactor. Requires Mn(2+) as cofactor.

The enzyme catalyses (2R)-ethylmalonyl-CoA = (2S)-ethylmalonyl-CoA. It carries out the reaction (R)-methylmalonyl-CoA = (S)-methylmalonyl-CoA. In terms of biological role, promiscuous isomerase that catalyzes epimerization of both ethylmalonyl-CoA and methylmalonyl-CoA. Has thus a dual role in the ethylmalonyl-CoA pathway for acetyl-CoA assimilation required for R.sphaeroides growth on acetate as sole carbon source. This chain is Ethylmalonyl-CoA/methylmalonyl-CoA epimerase, found in Cereibacter sphaeroides (strain ATCC 17023 / DSM 158 / JCM 6121 / CCUG 31486 / LMG 2827 / NBRC 12203 / NCIMB 8253 / ATH 2.4.1.) (Rhodobacter sphaeroides).